Consider the following 709-residue polypeptide: Ral guanine nucleotide dissociation stimulator-like 3 (709 aa).

Residues 26–55 form a disordered region; that stretch reads VYSVSLRRQRSQRSTPERSGEGQTPIPATD. Positions 64-201 constitute an N-terminal Ras-GEF domain; it reads KVRALRAARL…LLEDFLKEAK (138 aa). Disordered regions lie at residues 203-225, 395-416, and 502-604; these read EQTE…TPGS, SQEE…KLPP, and PPAA…SRVP. The 256-residue stretch at 248 to 503 folds into the Ras-GEF domain; sequence SVDDVAEQLT…YRVSRVIEPP (256 aa). Low complexity-rich tracts occupy residues 502 to 511 and 533 to 551; these read PPAASCPSSP and SSPG…SVSP. Phosphoserine is present on residues S506 and S510. The span at 552–576 shows a compositional bias: pro residues; sequence GSPPSSPRNREPPPPGSPPASPGPQ. S553, S568, S572, S577, and S600 each carry phosphoserine. The interaction with HRAS, MRAS and RIT1 stretch occupies residues 611 to 706; sequence SEARVIRVSI…KEGTGHTLSA (96 aa). The Ras-associating domain occupies 612–699; sequence EARVIRVSIN…GDFLLRRKEG (88 aa).

Interacts with GTP-bound forms of RIT1, HRAS and MRAS. In terms of tissue distribution, widely expressed. Expressed at high levels in the liver and kidney.

Functionally, guanine nucleotide exchange factor (GEF) for Ral-A. Potential effector of GTPase HRas and Ras-related protein M-Ras. Negatively regulates Elk-1-dependent gene induction downstream of HRas and MEKK1. The sequence is that of Ral guanine nucleotide dissociation stimulator-like 3 (Rgl3) from Mus musculus (Mouse).